Here is a 1129-residue protein sequence, read N- to C-terminus: Phytochrome A (1129 aa).

Residues 217-399 enclose the GAF domain; sequence SMERLCDTMV…VFAIHVSKEL (183 aa). A phytochromobilin-binding site is contributed by C322. PAS domains follow at residues 622-692 and 755-826; these read VTSE…LQGK and DYKA…VNLG. The region spanning 906 to 1123 is the Histidine kinase domain; the sequence is YLRRQAKNPL…TFIITVELAA (218 aa).

It belongs to the phytochrome family. Homodimer. Post-translationally, contains one covalently linked phytochromobilin chromophore.

In terms of biological role, regulatory photoreceptor which exists in two forms that are reversibly interconvertible by light: the Pr form that absorbs maximally in the red region of the spectrum and the Pfr form that absorbs maximally in the far-red region. Photoconversion of Pr to Pfr induces an array of morphogenic responses, whereas reconversion of Pfr to Pr cancels the induction of those responses. Pfr controls the expression of a number of nuclear genes including those encoding the small subunit of ribulose-bisphosphate carboxylase, chlorophyll A/B binding protein, protochlorophyllide reductase, rRNA, etc. It also controls the expression of its own gene(s) in a negative feedback fashion. The polypeptide is Phytochrome A (PHYA) (Petroselinum crispum (Parsley)).